Reading from the N-terminus, the 121-residue chain is Small ribosomal subunit protein uS11c (121 aa).

It belongs to the universal ribosomal protein uS11 family. As to quaternary structure, part of the 30S ribosomal subunit.

It localises to the plastid. Its subcellular location is the chloroplast. This Cyanidioschyzon merolae (strain NIES-3377 / 10D) (Unicellular red alga) protein is Small ribosomal subunit protein uS11c.